A 502-amino-acid chain; its full sequence is Hexokinase-9 (502 aa).

A helical transmembrane segment spans residues 5 to 24; sequence AALASAAMAAAAVAVVSTVL. Residues 37 to 488 enclose the Hexokinase domain; it reads RAEAVLLRDL…SGVGAALLAA (452 aa). The hexokinase small subdomain stretch occupies residues 92–230; that stretch reads SGGEKGMFYA…GLDMKVTALV (139 aa). Positions 106, 107, and 108 each coordinate ADP. Thr-196, Lys-197, Asn-231, and Asp-232 together coordinate D-glucose. The interval 231–477 is hexokinase large subdomain; it reads NDTVGTLAAG…PSVMIKHVND (247 aa). Thr-255 contacts ADP. D-glucose is bound by residues Asn-258, Glu-286, and Glu-317. An ADP-binding site is contributed by Gly-442.

It belongs to the hexokinase family. Expressed in roots, leaves, flowers, immature seeds, endosperm and seed coat.

Its subcellular location is the plastid. It localises to the chloroplast outer membrane. It carries out the reaction a D-hexose + ATP = a D-hexose 6-phosphate + ADP + H(+). The catalysed reaction is D-fructose + ATP = D-fructose 6-phosphate + ADP + H(+). The enzyme catalyses D-glucose + ATP = D-glucose 6-phosphate + ADP + H(+). The protein operates within carbohydrate metabolism; hexose metabolism. It participates in carbohydrate degradation; glycolysis; D-glyceraldehyde 3-phosphate and glycerone phosphate from D-glucose: step 1/4. Fructose and glucose phosphorylating enzyme. This Oryza sativa subsp. japonica (Rice) protein is Hexokinase-9 (HXK9).